Reading from the N-terminus, the 433-residue chain is Serine hydroxymethyltransferase (433 aa).

Residues Leu132 and 136–138 (GHL) each bind (6S)-5,6,7,8-tetrahydrofolate. Lys241 carries the N6-(pyridoxal phosphate)lysine modification.

It belongs to the SHMT family. As to quaternary structure, homodimer. Requires pyridoxal 5'-phosphate as cofactor.

The protein resides in the cytoplasm. It carries out the reaction (6R)-5,10-methylene-5,6,7,8-tetrahydrofolate + glycine + H2O = (6S)-5,6,7,8-tetrahydrofolate + L-serine. It participates in one-carbon metabolism; tetrahydrofolate interconversion. It functions in the pathway amino-acid biosynthesis; glycine biosynthesis; glycine from L-serine: step 1/1. In terms of biological role, catalyzes the reversible interconversion of serine and glycine with tetrahydrofolate (THF) serving as the one-carbon carrier. This reaction serves as the major source of one-carbon groups required for the biosynthesis of purines, thymidylate, methionine, and other important biomolecules. Also exhibits THF-independent aldolase activity toward beta-hydroxyamino acids, producing glycine and aldehydes, via a retro-aldol mechanism. This Methylobacterium sp. (strain 4-46) protein is Serine hydroxymethyltransferase.